Here is a 153-residue protein sequence, read N- to C-terminus: MYAIIRLKGSVNTRPEIKDTLRMLRLNQINHCVVVEENPTYKGMIQVVKDYVAFGVINADTLAMIMEHRGRLEGGDRLTNEYVAKNSSYKSIKEFAAAVAEGKAKLGDMPGLKPVFRMHPPRKGHKGLKRTYQQGGALGNYGEEIASLVEQMR.

It belongs to the universal ribosomal protein uL30 family. As to quaternary structure, part of the 50S ribosomal subunit.

This is Large ribosomal subunit protein uL30 from Methanocella arvoryzae (strain DSM 22066 / NBRC 105507 / MRE50).